We begin with the raw amino-acid sequence, 340 residues long: DNA-directed RNA polymerase subunit alpha (340 aa).

An alpha N-terminal domain (alpha-NTD) region spans residues 1–236 (MLSLSKNWNT…EQLQLFIAFE (236 aa)). The interval 251–340 (FSPYLLKRVD…LSKRYEDSYN (90 aa)) is alpha C-terminal domain (alpha-CTD).

It belongs to the RNA polymerase alpha chain family. Homodimer. The RNAP catalytic core consists of 2 alpha, 1 beta, 1 beta' and 1 omega subunit. When a sigma factor is associated with the core the holoenzyme is formed, which can initiate transcription.

The catalysed reaction is RNA(n) + a ribonucleoside 5'-triphosphate = RNA(n+1) + diphosphate. In terms of biological role, DNA-dependent RNA polymerase catalyzes the transcription of DNA into RNA using the four ribonucleoside triphosphates as substrates. The polypeptide is DNA-directed RNA polymerase subunit alpha (Rickettsia prowazekii (strain Madrid E)).